Consider the following 364-residue polypeptide: tRNA-specific 2-thiouridylase MnmA 1 (364 aa).

ATP contacts are provided by residues 11 to 18 and Phe-37; that span reads GMSGGTDS. The active-site Nucleophile is the Cys-96. A disulfide bond links Cys-96 and Cys-193. Residue Gly-120 coordinates ATP. Positions 142 to 144 are interaction with tRNA; the sequence is KDQ. Cys-193 functions as the Cysteine persulfide intermediate in the catalytic mechanism. The interval 309–310 is interaction with tRNA; the sequence is RY.

This sequence belongs to the MnmA/TRMU family.

It is found in the cytoplasm. The enzyme catalyses S-sulfanyl-L-cysteinyl-[protein] + uridine(34) in tRNA + AH2 + ATP = 2-thiouridine(34) in tRNA + L-cysteinyl-[protein] + A + AMP + diphosphate + H(+). Catalyzes the 2-thiolation of uridine at the wobble position (U34) of tRNA, leading to the formation of s(2)U34. This is tRNA-specific 2-thiouridylase MnmA 1 from Bacteroides fragilis (strain ATCC 25285 / DSM 2151 / CCUG 4856 / JCM 11019 / LMG 10263 / NCTC 9343 / Onslow / VPI 2553 / EN-2).